Here is a 173-residue protein sequence, read N- to C-terminus: Histone deacetylase complex subunit SAP30 homolog (173 aa).

Residues 21–69 form an Atypical zinc finger; the sequence is CCLLDDGDRCRNQAGNASYSKRIQKTVTQRRLKLSIDTAARHIYICDFH.

It belongs to the SAP30 family. In terms of assembly, component of the class 1 Sin3-histone deacetylase complex (HDAC).

Its subcellular location is the nucleus. In terms of biological role, required for the function of the class 1 Sin3-histone deacetylase complex (HDAC). The sequence is that of Histone deacetylase complex subunit SAP30 homolog from Aedes aegypti (Yellowfever mosquito).